A 140-amino-acid polypeptide reads, in one-letter code: Nucleoside diphosphate kinase (140 aa).

Residues Lys11, Phe59, Arg87, Thr93, Arg104, and Asn114 each coordinate ATP. His117 (pros-phosphohistidine intermediate) is an active-site residue.

It belongs to the NDK family. Homotetramer. Mg(2+) is required as a cofactor.

It is found in the cytoplasm. The catalysed reaction is a 2'-deoxyribonucleoside 5'-diphosphate + ATP = a 2'-deoxyribonucleoside 5'-triphosphate + ADP. It carries out the reaction a ribonucleoside 5'-diphosphate + ATP = a ribonucleoside 5'-triphosphate + ADP. Functionally, major role in the synthesis of nucleoside triphosphates other than ATP. The ATP gamma phosphate is transferred to the NDP beta phosphate via a ping-pong mechanism, using a phosphorylated active-site intermediate. This chain is Nucleoside diphosphate kinase, found in Xanthobacter autotrophicus (strain ATCC BAA-1158 / Py2).